Here is a 559-residue protein sequence, read N- to C-terminus: Formate--tetrahydrofolate ligase (559 aa).

68-75 (TPAGEGKS) serves as a coordination point for ATP.

It belongs to the formate--tetrahydrofolate ligase family.

It carries out the reaction (6S)-5,6,7,8-tetrahydrofolate + formate + ATP = (6R)-10-formyltetrahydrofolate + ADP + phosphate. The protein operates within one-carbon metabolism; tetrahydrofolate interconversion. This is Formate--tetrahydrofolate ligase from Clostridium tetani (strain Massachusetts / E88).